A 487-amino-acid polypeptide reads, in one-letter code: 6-phosphogluconate dehydrogenase, decarboxylating 3, chloroplastic (487 aa).

Met1 is modified (N-acetylmethionine). NADP(+)-binding positions include 13 to 18, 36 to 38, 80 to 82, and Asn108; these read GLAVMG, NRT, and VKA. Substrate contacts are provided by residues Asn108 and 134–136; that span reads SGG. Lys188 acts as the Proton acceptor in catalysis. Position 191–192 (191–192) interacts with substrate; that stretch reads HN. Glu195 serves as the catalytic Proton donor. Substrate contacts are provided by Tyr196, Lys266, Arg293, Arg458, and His464.

Belongs to the 6-phosphogluconate dehydrogenase family. Forms homodimer. Forms heterodimers with PGD1 or PGD2.

Its subcellular location is the plastid. It is found in the chloroplast. It localises to the cytoplasm. The protein resides in the cytosol. It catalyses the reaction 6-phospho-D-gluconate + NADP(+) = D-ribulose 5-phosphate + CO2 + NADPH. It participates in carbohydrate degradation; pentose phosphate pathway; D-ribulose 5-phosphate from D-glucose 6-phosphate (oxidative stage): step 3/3. Its function is as follows. Catalyzes the oxidative decarboxylation of 6-phosphogluconate to ribulose 5-phosphate and CO(2), with concomitant reduction of NADP to NADPH. This chain is 6-phosphogluconate dehydrogenase, decarboxylating 3, chloroplastic, found in Arabidopsis thaliana (Mouse-ear cress).